Reading from the N-terminus, the 173-residue chain is Crossover junction endodeoxyribonuclease RuvC (173 aa).

Catalysis depends on residues aspartate 8, glutamate 67, and aspartate 139. 3 residues coordinate Mg(2+): aspartate 8, glutamate 67, and aspartate 139.

It belongs to the RuvC family. As to quaternary structure, homodimer which binds Holliday junction (HJ) DNA. The HJ becomes 2-fold symmetrical on binding to RuvC with unstacked arms; it has a different conformation from HJ DNA in complex with RuvA. In the full resolvosome a probable DNA-RuvA(4)-RuvB(12)-RuvC(2) complex forms which resolves the HJ. The cofactor is Mg(2+).

The protein localises to the cytoplasm. The catalysed reaction is Endonucleolytic cleavage at a junction such as a reciprocal single-stranded crossover between two homologous DNA duplexes (Holliday junction).. The RuvA-RuvB-RuvC complex processes Holliday junction (HJ) DNA during genetic recombination and DNA repair. Endonuclease that resolves HJ intermediates. Cleaves cruciform DNA by making single-stranded nicks across the HJ at symmetrical positions within the homologous arms, yielding a 5'-phosphate and a 3'-hydroxyl group; requires a central core of homology in the junction. The consensus cleavage sequence is 5'-(A/T)TT(C/G)-3'. Cleavage occurs on the 3'-side of the TT dinucleotide at the point of strand exchange. HJ branch migration catalyzed by RuvA-RuvB allows RuvC to scan DNA until it finds its consensus sequence, where it cleaves and resolves the cruciform DNA. This Yersinia enterocolitica serotype O:8 / biotype 1B (strain NCTC 13174 / 8081) protein is Crossover junction endodeoxyribonuclease RuvC.